The following is a 293-amino-acid chain: Ribonuclease HIII (293 aa).

The RNase H type-2 domain maps to L78–R293. The a divalent metal cation site is built by D84, E85, and D187.

This sequence belongs to the RNase HII family. RnhC subfamily. Mn(2+) serves as cofactor. Requires Mg(2+) as cofactor.

The protein resides in the cytoplasm. It carries out the reaction Endonucleolytic cleavage to 5'-phosphomonoester.. Its function is as follows. Endonuclease that specifically degrades the RNA of RNA-DNA hybrids. This chain is Ribonuclease HIII, found in Streptococcus pneumoniae (strain 70585).